The chain runs to 723 residues: Probable alpha-fucosidase A (723 aa).

An N-terminal signal peptide occupies residues 1–15; the sequence is MRSLVLLGMSSLATA. N-linked (GlcNAc...) asparagine glycans are attached at residues asparagine 77, asparagine 98, asparagine 117, asparagine 171, asparagine 194, asparagine 243, asparagine 334, asparagine 558, asparagine 566, and asparagine 595.

The protein belongs to the glycosyl hydrolase 95 family.

It localises to the secreted. It carries out the reaction an alpha-L-fucoside + H2O = L-fucose + an alcohol. Alpha-fucosidase involved in degradation of fucosylated xyloglucans. Hydrolyzes alpha-1,2-linked fucose. The polypeptide is Probable alpha-fucosidase A (afcA) (Aspergillus oryzae (strain ATCC 42149 / RIB 40) (Yellow koji mold)).